Reading from the N-terminus, the 1053-residue chain is Zinc finger and BTB domain-containing protein 11 (1053 aa).

Residues 141–156 (LDLESGEESNESEDDL) are compositionally biased toward acidic residues. Residues 141–173 (LDLESGEESNESEDDLSNFTSSPTTASKPAKKK) are disordered. Residues 157-168 (SNFTSSPTTASK) are compositionally biased toward low complexity. The 69-residue stretch at 214–282 (CDVTLLIEGE…AYTSVLSFDF (69 aa)) folds into the BTB domain. The interval 546–566 (LVQRGKKMKQPKRDAKENTEE) is disordered. The segment covering 556-566 (PKRDAKENTEE) has biased composition (basic and acidic residues). C2H2-type zinc fingers lie at residues 569-591 (HKCG…KLKH) and 597-619 (YKCP…LIRH). The disordered stretch occupies residues 619–643 (HTRKDAPSSSSSNSTSNEASGTSSE). Low complexity predominate over residues 626–642 (SSSSSNSTSNEASGTSS). 10 consecutive C2H2-type zinc fingers follow at residues 651–673 (FICS…MLKH), 679–701 (HACQ…QSLH), 707–729 (FQCE…MSIH), 735–757 (YLCS…FKKH), 766–788 (YHCT…MNKH), 794–816 (FQCQ…VKSH), 822–846 (YRCN…KATH), 858–880 (RVCE…MNNH), 886–908 (FECL…VRTH), and 914–937 (YVCP…TKFH). K1043 participates in a covalent cross-link: Glycyl lysine isopeptide (Lys-Gly) (interchain with G-Cter in SUMO2). S1050 carries the phosphoserine modification.

It is found in the nucleus. Its subcellular location is the nucleolus. In terms of biological role, may be involved in transcriptional regulation. The chain is Zinc finger and BTB domain-containing protein 11 from Homo sapiens (Human).